We begin with the raw amino-acid sequence, 393 residues long: Calreticulin (393 aa).

The N-terminal stretch at 1-16 is a signal peptide; that stretch reads MLSILLTLLLSKYALG. Asn27 is a glycosylation site (N-linked (GlcNAc...) asparagine). An intrachain disulfide couples Cys103 to Cys135. Tyr107, Lys109, Tyr126, and Asp133 together coordinate an alpha-D-glucoside. 7 repeat units span residues 189-200, 208-219, 225-236, 242-253, 257-267, 271-281, and 285-295. Positions 189–253 are 4 X 12 AA approximate repeats; it reads VEEGSLEDDW…DAKKPDDWDD (65 aa). Residues 194–277 are disordered; sequence LEDDWDMLPP…EYKGEWTPRR (84 aa). Over residues 202 to 216 the composition is skewed to basic and acidic residues; sequence PPKKIDDPNDKKPDD. The segment covering 217 to 226 has biased composition (acidic residues); sequence WVDEQFIDDP. Basic and acidic residues-rich tracts occupy residues 227–249 and 258–277; these read DDKK…KKPD and EWER…TPRR. A 3 X 11 AA approximate repeats region spans residues 257–295; the sequence is GEWERPQKDNPEYKGEWTPRRIDNPKYKGEWKPVQIDNP. Asp315 is an an alpha-D-glucoside binding site. The disordered stretch occupies residues 351–393; it reads AEVAKEQSSAKDDKEEAEETKERKELPYDAKASDEPSGDHDEL. The Prevents secretion from ER motif lies at 390-393; sequence HDEL.

The protein belongs to the calreticulin family.

It is found in the endoplasmic reticulum lumen. Functionally, molecular calcium-binding chaperone promoting folding, oligomeric assembly and quality control in the ER via the calreticulin/calnexin cycle. This lectin may interact transiently with almost all of the monoglucosylated glycoproteins that are synthesized in the ER. The chain is Calreticulin from Schistosoma mansoni (Blood fluke).